A 217-amino-acid chain; its full sequence is Uracil-DNA glycosylase (217 aa).

Catalysis depends on D62, which acts as the Proton acceptor.

It belongs to the uracil-DNA glycosylase (UDG) superfamily. UNG family.

It is found in the cytoplasm. The catalysed reaction is Hydrolyzes single-stranded DNA or mismatched double-stranded DNA and polynucleotides, releasing free uracil.. Excises uracil residues from the DNA which can arise as a result of misincorporation of dUMP residues by DNA polymerase or due to deamination of cytosine. This chain is Uracil-DNA glycosylase, found in Streptococcus pyogenes serotype M6 (strain ATCC BAA-946 / MGAS10394).